The primary structure comprises 317 residues: Transaldolase (317 aa).

K132 serves as the catalytic Schiff-base intermediate with substrate.

This sequence belongs to the transaldolase family. Type 1 subfamily. As to quaternary structure, homodimer.

It is found in the cytoplasm. It carries out the reaction D-sedoheptulose 7-phosphate + D-glyceraldehyde 3-phosphate = D-erythrose 4-phosphate + beta-D-fructose 6-phosphate. Its pathway is carbohydrate degradation; pentose phosphate pathway; D-glyceraldehyde 3-phosphate and beta-D-fructose 6-phosphate from D-ribose 5-phosphate and D-xylulose 5-phosphate (non-oxidative stage): step 2/3. Functionally, transaldolase is important for the balance of metabolites in the pentose-phosphate pathway. This is Transaldolase from Yersinia pseudotuberculosis serotype O:3 (strain YPIII).